Consider the following 759-residue polypeptide: DNA replication licensing factor mcm-5 (759 aa).

The MCM domain maps to 330–536 (AYELIAKSIA…KDATLAKHVI (207 aa)). Arg-370 provides a ligand contact to ADP. An Arginine finger motif is present at residues 511-514 (SRFD).

Belongs to the MCM family. As to quaternary structure, component of the mcm2-7 complex. The complex forms a toroidal hexameric ring with the proposed subunit order mcm2-mcm6-mcm4-mcm7-mcm3-mcm5 (By simililarity).

It localises to the nucleus. The protein resides in the cytoplasm. The protein localises to the cytosol. It catalyses the reaction ATP + H2O = ADP + phosphate + H(+). Its function is as follows. Acts as a component of the MCM2-7 complex (MCM complex) which is the replicative helicase essential for 'once per cell cycle' DNA replication initiation and elongation in eukaryotic cells. Core component of CDC45-MCM-GINS (CMG) helicase, the molecular machine that unwinds template DNA during replication, and around which the replisome is built. The active ATPase sites in the MCM2-7 ring are formed through the interaction surfaces of two neighboring subunits such that a critical structure of a conserved arginine finger motif is provided in trans relative to the ATP-binding site of the Walker A box of the adjacent subunit. The six ATPase active sites, however, are likely to contribute differentially to the complex helicase activity. In Caenorhabditis elegans, this protein is DNA replication licensing factor mcm-5 (mcm-5).